The following is a 309-amino-acid chain: Sulfate adenylyltransferase subunit 2 (309 aa).

It belongs to the PAPS reductase family. CysD subfamily. Heterodimer composed of CysD, the smaller subunit, and CysN.

It carries out the reaction sulfate + ATP + H(+) = adenosine 5'-phosphosulfate + diphosphate. It functions in the pathway sulfur metabolism; hydrogen sulfide biosynthesis; sulfite from sulfate: step 1/3. Functionally, with CysN forms the ATP sulfurylase (ATPS) that catalyzes the adenylation of sulfate producing adenosine 5'-phosphosulfate (APS) and diphosphate, the first enzymatic step in sulfur assimilation pathway. APS synthesis involves the formation of a high-energy phosphoric-sulfuric acid anhydride bond driven by GTP hydrolysis by CysN coupled to ATP hydrolysis by CysD. In Mycobacterium bovis (strain ATCC BAA-935 / AF2122/97), this protein is Sulfate adenylyltransferase subunit 2.